Here is a 64-residue protein sequence, read N- to C-terminus: uncharacterized protein (64 aa).

The chain crosses the membrane as a helical span at residues 41–61; it reads VFLALKVLGIMVLFYLLDAII.

It localises to the membrane. This is an uncharacterized protein from Acheta domesticus (House cricket).